Reading from the N-terminus, the 54-residue chain is MAVPKKRTSTSKKRIRKNVWKKKGYWAALKAFSLAKSLSTGNSKSFFVRQINLE.

Belongs to the bacterial ribosomal protein bL32 family.

It is found in the plastid. It localises to the chloroplast. The protein is Large ribosomal subunit protein bL32c of Gossypium barbadense (Sea Island cotton).